The primary structure comprises 475 residues: Putative response regulator NtrX-like (475 aa).

In terms of domain architecture, Response regulatory spans 5–121 (DVLILDDEES…KLIILLKRAC (117 aa)). 4-aspartylphosphate is present on Asp54. Residues 143–369 (LVGGCSVTLK…LRNVVEWTLI (227 aa)) enclose the Sigma-54 factor interaction domain. Residues 171 to 178 (GKVGSGKE) and 232 to 241 (ANNGTLYIDE) each bind ATP.

Functionally, member of the two-component regulatory system RT0550/RT0603. In Rickettsia typhi (strain ATCC VR-144 / Wilmington), this protein is Putative response regulator NtrX-like.